We begin with the raw amino-acid sequence, 87 residues long: Sec-independent protein translocase protein TatA (87 aa).

A helical transmembrane segment spans residues 3–23 (GTFSWTHLLIIALLFVVLFGA). The interval 47–87 (MQHETPQANAAPVQQPAQQLPPAQPAQAPAQPVNQAEQKSA) is disordered. The span at 52 to 87 (PQANAAPVQQPAQQLPPAQPAQAPAQPVNQAEQKSA) shows a compositional bias: low complexity.

The protein belongs to the TatA/E family. In terms of assembly, the Tat system comprises two distinct complexes: a TatABC complex, containing multiple copies of TatA, TatB and TatC subunits, and a separate TatA complex, containing only TatA subunits. Substrates initially bind to the TatABC complex, which probably triggers association of the separate TatA complex to form the active translocon.

The protein resides in the cell membrane. Functionally, part of the twin-arginine translocation (Tat) system that transports large folded proteins containing a characteristic twin-arginine motif in their signal peptide across membranes. TatA could form the protein-conducting channel of the Tat system. In Nocardia farcinica (strain IFM 10152), this protein is Sec-independent protein translocase protein TatA.